Consider the following 370-residue polypeptide: Trans-enoyl reductase xenG (370 aa).

Positions 1–32 (MASTGLPQLPPSQKAVIQSEKTPGAFEVSENR) are disordered. NADP(+)-binding positions include 54–57 (CDWK), 177–180 (STAS), 200–203 (SPKN), Tyr-218, 265–266 (FE), and 356–357 (VS).

Belongs to the zinc-containing alcohol dehydrogenase family. As to quaternary structure, monomer.

Its pathway is mycotoxin biosynthesis. Functionally, trans-enoyl reductase; part of the gene cluster that mediates the biosynthesis of xenoacremones such as xenoacremone A, a compound that shows inhibitory activity toward the PI3K/AKT signaling pathway and which has the ability to induce apoptosis of A549 lung cancer cells. Within the pathway, cooperation of the hybrid PKS-NRPS xenE and the trans-acting enoyl reductase xenG is responsible for the formation of the reduced tyrosine-nonaketide derivative. The alpha/beta hydrolase xenA then accelerates intramolecular nucleophilic attack to give a pyrrolidone derivative. Subsequently, three enzymes, xenF, xenD, and xenC, coordinately participate in the conversion to xenoacremone B. XenF catalyzes sigmatropic rearrangement to form an A-ring, which leads to an unusual intermediate with a hexane ring, which is required for the formation of the tricarbocyclic product. Epoxidation catalyzed by xenD and the formation of the paracyclophane ether catalyzed by xenC initiate a spontaneous intramolecular Diels-Alder (IMDA) reaction to yield xenoacremone B. Spontaneous hydration of xenoacremone B leads to the formation of xenoacremone A, which undergoes subsequent methylation to afford xenoacremone C. The protein is Trans-enoyl reductase xenG of Xenoacremonium sinensis (Endophyte fungus).